The sequence spans 391 residues: Ferrochelatase (391 aa).

Fe cation-binding residues include H196 and E281.

The protein belongs to the ferrochelatase family.

Its subcellular location is the cytoplasm. The enzyme catalyses heme b + 2 H(+) = protoporphyrin IX + Fe(2+). It participates in porphyrin-containing compound metabolism; protoheme biosynthesis; protoheme from protoporphyrin-IX: step 1/1. In terms of biological role, catalyzes the ferrous insertion into protoporphyrin IX. The sequence is that of Ferrochelatase from Prochlorococcus marinus (strain NATL1A).